A 297-amino-acid polypeptide reads, in one-letter code: Vacuolar protein sorting-associated protein 26C (297 aa).

The protein belongs to the VPS26 family. Component of the commander complex that is essential for endosomal recycling of transmembrane cargos; the commander complex is composed of the CCC subcomplex and the retriever subcomplex. Component of the heterotrimeric retriever complex consisting of VPS26C, VPS29 and VPS35L; within the complex interacts with VPS35L. Interacts with SNX17 (via C-terminus); the interaction is direct and associates SNX17 with the retriever complex. Interacts with SNX31; the interaction is direct.

Its subcellular location is the endosome. Component of the commander complex that is essential for endosomal recycling of transmembrane cargos; the commander complex is composed of the CCC subcomplex and the retriever subcomplex. Component of the retriever complex, which is a heterotrimeric complex related to retromer cargo-selective complex (CSC) and essential for retromer-independent retrieval and recycling of numerous cargos such as integrin alpha-5/beta-1 (ITGA5:ITGB1). The recruitment of the retriever complex to the endosomal membrane involves CCC and WASH complexes. In the endosomes, drives the retriever and recycling of NxxY-motif-containing cargo proteins by coupling to SNX17, a cargo essential for the homeostatic maintenance of numerous cell surface proteins associated with processes that include cell migration, cell adhesion, nutrient supply and cell signaling. This chain is Vacuolar protein sorting-associated protein 26C (VPS26C), found in Pongo abelii (Sumatran orangutan).